The chain runs to 296 residues: Formamidopyrimidine-DNA glycosylase (296 aa).

Catalysis depends on proline 2, which acts as the Schiff-base intermediate with DNA. Residue glutamate 3 is the Proton donor of the active site. Lysine 58 functions as the Proton donor; for beta-elimination activity in the catalytic mechanism. The DNA site is built by histidine 106, arginine 125, and lysine 167. The segment at 258–294 (RVYDRVGLPCSRPGCAGAITRIVQANRSTFFCATCQP) adopts an FPG-type zinc-finger fold. Arginine 284 functions as the Proton donor; for delta-elimination activity in the catalytic mechanism.

The protein belongs to the FPG family. In terms of assembly, monomer. Requires Zn(2+) as cofactor.

The catalysed reaction is Hydrolysis of DNA containing ring-opened 7-methylguanine residues, releasing 2,6-diamino-4-hydroxy-5-(N-methyl)formamidopyrimidine.. It catalyses the reaction 2'-deoxyribonucleotide-(2'-deoxyribose 5'-phosphate)-2'-deoxyribonucleotide-DNA = a 3'-end 2'-deoxyribonucleotide-(2,3-dehydro-2,3-deoxyribose 5'-phosphate)-DNA + a 5'-end 5'-phospho-2'-deoxyribonucleoside-DNA + H(+). Involved in base excision repair of DNA damaged by oxidation or by mutagenic agents. Acts as a DNA glycosylase that recognizes and removes damaged bases. Has a preference for oxidized purines, such as 7,8-dihydro-8-oxoguanine (8-oxoG). Has AP (apurinic/apyrimidinic) lyase activity and introduces nicks in the DNA strand. Cleaves the DNA backbone by beta-delta elimination to generate a single-strand break at the site of the removed base with both 3'- and 5'-phosphates. This chain is Formamidopyrimidine-DNA glycosylase, found in Methylobacterium radiotolerans (strain ATCC 27329 / DSM 1819 / JCM 2831 / NBRC 15690 / NCIMB 10815 / 0-1).